Reading from the N-terminus, the 248-residue chain is UDP-2,3-diacylglucosamine hydrolase (248 aa).

Mn(2+) is bound by residues D7, H9, D40, N78, and H113. 78–79 contributes to the substrate binding site; it reads NR. D121, S159, T163, K166, and H194 together coordinate substrate. Mn(2+) contacts are provided by H194 and H196.

The protein belongs to the LpxH family. Mn(2+) is required as a cofactor.

The protein localises to the cell inner membrane. The catalysed reaction is UDP-2-N,3-O-bis[(3R)-3-hydroxytetradecanoyl]-alpha-D-glucosamine + H2O = 2-N,3-O-bis[(3R)-3-hydroxytetradecanoyl]-alpha-D-glucosaminyl 1-phosphate + UMP + 2 H(+). It functions in the pathway glycolipid biosynthesis; lipid IV(A) biosynthesis; lipid IV(A) from (3R)-3-hydroxytetradecanoyl-[acyl-carrier-protein] and UDP-N-acetyl-alpha-D-glucosamine: step 4/6. Hydrolyzes the pyrophosphate bond of UDP-2,3-diacylglucosamine to yield 2,3-diacylglucosamine 1-phosphate (lipid X) and UMP by catalyzing the attack of water at the alpha-P atom. Involved in the biosynthesis of lipid A, a phosphorylated glycolipid that anchors the lipopolysaccharide to the outer membrane of the cell. The polypeptide is UDP-2,3-diacylglucosamine hydrolase (Pseudomonas syringae pv. syringae (strain B728a)).